The primary structure comprises 880 residues: GAS2-like protein 2 (880 aa).

In terms of domain architecture, Calponin-homology (CH) spans 32-159; that stretch reads EAMKEDLAEW…CLLELGRRAW (128 aa). The segment at 180–200 is disordered; the sequence is RRELALPPPDPSPPAPPRRQP. Residues 185-198 are compositionally biased toward pro residues; that stretch reads LPPPDPSPPAPPRR. The region spanning 201-273 is the GAR domain; the sequence is CHFRNLDQMV…HYLDKHDPCR (73 aa). 4 disordered regions span residues 283–360, 372–437, 489–533, and 676–880; these read SFLK…MAPF, WRQP…NPTP, ESVR…ELGR, and APTG…ESWV. A compositionally biased stretch (polar residues) spans 301-315; it reads GPSQTQPTMTISRSQ. The tract at residues 438 to 880 is interaction with ADORA2A; that stretch reads QRLRAIEATT…PLPPEEESWV (443 aa). Residues 506–515 are compositionally biased toward pro residues; it reads RLPPARPPTP. The span at 725-734 shows a compositional bias: polar residues; sequence QDCSASTVSA. 2 stretches are compositionally biased toward basic residues: residues 757 to 767 and 774 to 785; these read KGRRTLRKPKR and LKLRPRIRPRRD.

This sequence belongs to the GAS2 family. Interacts with ADORA2A (via its cytoplasmic C-terminal domain). Interacts with GNAS, GNAL, GNAQ, and GNA13. Interacts with MAPRE1. Expressed in bronchial and nasal epithelial cells (at protein level). Expressed in brain, kidney, lung, testis, fallopian tubes, and skeletal muscle. Expressed at low levels in stomach and colon.

The protein resides in the cytoplasm. The protein localises to the cytoskeleton. It localises to the cell membrane. It is found in the stress fiber. Its subcellular location is the cilium basal body. In terms of biological role, involved in the cross-linking of microtubules and microfilaments. Regulates microtubule dynamics and stability by interacting with microtubule plus-end tracking proteins, such as MAPRE1, to regulate microtubule growth along actin stress fibers. Enhances ADORA2-mediated adenylyl cyclase activation by acting as a scaffold to recruit trimeric G-protein complexes to ADORA2A. Regulates ciliary orientation and performance in cells located in the airway. The polypeptide is GAS2-like protein 2 (GAS2L2) (Homo sapiens (Human)).